The following is a 1362-amino-acid chain: DNA-directed RNA polymerase subunit beta (1362 aa).

It belongs to the RNA polymerase beta chain family. The RNAP catalytic core consists of 2 alpha, 1 beta, 1 beta' and 1 omega subunit. When a sigma factor is associated with the core the holoenzyme is formed, which can initiate transcription.

It carries out the reaction RNA(n) + a ribonucleoside 5'-triphosphate = RNA(n+1) + diphosphate. In terms of biological role, DNA-dependent RNA polymerase catalyzes the transcription of DNA into RNA using the four ribonucleoside triphosphates as substrates. This is DNA-directed RNA polymerase subunit beta from Acinetobacter baumannii (strain AB307-0294).